The primary structure comprises 234 residues: Glucosamine-6-phosphate deaminase (234 aa).

D63 serves as the catalytic Proton acceptor; for enolization step. N129 (for ring-opening step) is an active-site residue. The active-site Proton acceptor; for ring-opening step is the H131. E136 serves as the catalytic For ring-opening step.

The protein belongs to the glucosamine/galactosamine-6-phosphate isomerase family. NagB subfamily.

The catalysed reaction is alpha-D-glucosamine 6-phosphate + H2O = beta-D-fructose 6-phosphate + NH4(+). It participates in amino-sugar metabolism; N-acetylneuraminate degradation; D-fructose 6-phosphate from N-acetylneuraminate: step 5/5. Its function is as follows. Catalyzes the reversible isomerization-deamination of glucosamine 6-phosphate (GlcN6P) to form fructose 6-phosphate (Fru6P) and ammonium ion. The polypeptide is Glucosamine-6-phosphate deaminase (Listeria monocytogenes serovar 1/2a (strain ATCC BAA-679 / EGD-e)).